We begin with the raw amino-acid sequence, 335 residues long: Tryptophan--tRNA ligase (335 aa).

Residues 19-21 (QPS) and 28-29 (GN) each bind ATP. Residues 20-29 (PSSGMLHLGN) carry the 'HIGH' region motif. Asp143 lines the L-tryptophan pocket. Residues 155–157 (GAD), Ile192, and 201–205 (KMSKS) each bind ATP. A 'KMSKS' region motif is present at residues 201–205 (KMSKS).

Belongs to the class-I aminoacyl-tRNA synthetase family. In terms of assembly, homodimer.

It localises to the cytoplasm. It catalyses the reaction tRNA(Trp) + L-tryptophan + ATP = L-tryptophyl-tRNA(Trp) + AMP + diphosphate + H(+). Catalyzes the attachment of tryptophan to tRNA(Trp). This is Tryptophan--tRNA ligase from Tropheryma whipplei (strain Twist) (Whipple's bacillus).